A 320-amino-acid chain; its full sequence is NADH-ubiquinone oxidoreductase chain 1 (320 aa).

The next 8 membrane-spanning stretches (helical) occupy residues 3 to 23, 72 to 92, 103 to 123, 147 to 167, 174 to 194, 226 to 246, 255 to 275, and 295 to 315; these read LITI…VAFL, ILLI…WTPI, LGFL…LWAG, VTLG…TMQL, HIWL…STLA, FFLA…ILFI, ELFL…FLWI, and FLPL…SISG.

It belongs to the complex I subunit 1 family.

The protein resides in the mitochondrion inner membrane. It catalyses the reaction a ubiquinone + NADH + 5 H(+)(in) = a ubiquinol + NAD(+) + 4 H(+)(out). Core subunit of the mitochondrial membrane respiratory chain NADH dehydrogenase (Complex I) that is believed to belong to the minimal assembly required for catalysis. Complex I functions in the transfer of electrons from NADH to the respiratory chain. The immediate electron acceptor for the enzyme is believed to be ubiquinone. The protein is NADH-ubiquinone oxidoreductase chain 1 (MT-ND1) of Varanus jobiensis (Peach throat monitor).